The chain runs to 155 residues: Putative pre-16S rRNA nuclease (155 aa).

The protein belongs to the YqgF nuclease family.

The protein localises to the cytoplasm. Its function is as follows. Could be a nuclease involved in processing of the 5'-end of pre-16S rRNA. The protein is Putative pre-16S rRNA nuclease of Xanthomonas campestris pv. campestris (strain 8004).